We begin with the raw amino-acid sequence, 130 residues long: Phosphoribosyl-AMP cyclohydrolase (130 aa).

Aspartate 77 serves as a coordination point for Mg(2+). Cysteine 78 contributes to the Zn(2+) binding site. Mg(2+)-binding residues include aspartate 79 and aspartate 81. Residues cysteine 95 and cysteine 102 each coordinate Zn(2+).

Belongs to the PRA-CH family. In terms of assembly, homodimer. Mg(2+) serves as cofactor. Requires Zn(2+) as cofactor.

It localises to the cytoplasm. The enzyme catalyses 1-(5-phospho-beta-D-ribosyl)-5'-AMP + H2O = 1-(5-phospho-beta-D-ribosyl)-5-[(5-phospho-beta-D-ribosylamino)methylideneamino]imidazole-4-carboxamide. Its pathway is amino-acid biosynthesis; L-histidine biosynthesis; L-histidine from 5-phospho-alpha-D-ribose 1-diphosphate: step 3/9. In terms of biological role, catalyzes the hydrolysis of the adenine ring of phosphoribosyl-AMP. The chain is Phosphoribosyl-AMP cyclohydrolase from Pseudomonas putida (strain W619).